We begin with the raw amino-acid sequence, 307 residues long: Aspartate carbamoyltransferase catalytic subunit (307 aa).

Carbamoyl phosphate contacts are provided by arginine 49 and threonine 50. Lysine 77 is a binding site for L-aspartate. Carbamoyl phosphate contacts are provided by arginine 99, histidine 127, and glutamine 130. Positions 160 and 211 each coordinate L-aspartate. Positions 250 and 251 each coordinate carbamoyl phosphate.

It belongs to the aspartate/ornithine carbamoyltransferase superfamily. ATCase family. In terms of assembly, heterododecamer (2C3:3R2) of six catalytic PyrB chains organized as two trimers (C3), and six regulatory PyrI chains organized as three dimers (R2).

It catalyses the reaction carbamoyl phosphate + L-aspartate = N-carbamoyl-L-aspartate + phosphate + H(+). Its pathway is pyrimidine metabolism; UMP biosynthesis via de novo pathway; (S)-dihydroorotate from bicarbonate: step 2/3. Functionally, catalyzes the condensation of carbamoyl phosphate and aspartate to form carbamoyl aspartate and inorganic phosphate, the committed step in the de novo pyrimidine nucleotide biosynthesis pathway. The chain is Aspartate carbamoyltransferase catalytic subunit from Bacillus pumilus (strain SAFR-032).